A 190-amino-acid chain; its full sequence is MDNQFIFQYSWEILPKKWVHKMKRSEHGNRFYTNTDYLFPLLCFLKWHTYTRVQVLIDICGVDYPSRKRRFEVVYNLLSTRYNSRIRVQTSADEVTRISSVVSLFPSAGWWEREVWDMFGVSFINHPDLRRILTDYGFEGHPLRKDFPLSGYVEVRYDDPEKRVVSEPIEMTQEFRYFDFASPWEQRSDG.

The protein belongs to the complex I 30 kDa subunit family. In terms of assembly, complex I is composed of about 45 different subunits. This is a component of the iron-sulfur (IP) fragment of the enzyme.

Its subcellular location is the mitochondrion inner membrane. The enzyme catalyses a ubiquinone + NADH + 5 H(+)(in) = a ubiquinol + NAD(+) + 4 H(+)(out). Its function is as follows. Core subunit of the mitochondrial membrane respiratory chain NADH dehydrogenase (Complex I) that is believed to belong to the minimal assembly required for catalysis. Complex I functions in the transfer of electrons from NADH to the respiratory chain. The immediate electron acceptor for the enzyme is believed to be ubiquinone. This is NADH dehydrogenase [ubiquinone] iron-sulfur protein 3 (NAD9) from Oryza sativa subsp. japonica (Rice).